Consider the following 138-residue polypeptide: uncharacterized protein (138 aa).

The segment at residues 17 to 38 (LCRNDVAHEAGTNNVQIMRIEK) is a DNA-binding region (H-T-H motif).

This is an uncharacterized protein from Herpetosiphon aurantiacus (Herpetosiphon giganteus).